Here is a 475-residue protein sequence, read N- to C-terminus: 7-dehydrocholesterol reductase (475 aa).

Residues 1–21 (MAAKSQPNIPKAKSLDGVTND) are disordered. The residue at position 14 (Ser14) is a Phosphoserine. The next 6 helical transmembrane spans lie at 40-60 (LASVIFLLLFAPFIVYYFIMA), 154-174 (THLLWFANAHLLSWFSPTIIF), 177-197 (WIPLLWCANILGYAVSTFAMV), 266-286 (VTNAMVLVNVLQAIYVIDFFW), 306-326 (LGWGDCVWLPYLYTLQGLYLV), and 331-351 (QLSTPHAVGVLLLGLVGYYIF). Residues Lys358, Arg362, Leu395, Trp400, and 407–408 (NY) each bind NADP(+). The helical transmembrane segment at 420–440 (LACGGGHLLPYFYIIYMAILL) threads the bilayer. Residues Asp447, 451–455 (CASKY), and Tyr462 each bind NADP(+).

This sequence belongs to the ERG4/ERG24 family. In terms of assembly, interacts with DHCR24; this interaction regulates DHCR7 activity. Interacts with TMEM147. As to expression, widely expressed. Most abundant in adrenal gland, liver, testis, and brain.

The protein localises to the endoplasmic reticulum membrane. The enzyme catalyses cholesterol + NADP(+) = 7-dehydrocholesterol + NADPH + H(+). It catalyses the reaction 7-dehydrodesmosterol + NADPH + H(+) = desmosterol + NADP(+). The catalysed reaction is 5,6alpha-epoxy-5alpha-cholestan-3beta-ol + H2O = 5alpha-cholestane-3beta,5,6beta-triol. It carries out the reaction 5,6beta-epoxy-5beta-cholestan-3beta-ol + H2O = 5alpha-cholestane-3beta,5,6beta-triol. It participates in steroid biosynthesis; cholesterol biosynthesis. With respect to regulation, 7-DHC reductase and cholesterol-5,6-epoxide hydrolase (ChEH) activities are inhibited by tamoxifen and the selective AEBS ligand (4-benzyl-phenoxy)-ethyl-N-pyrrolidine (PBPE). ChEH activity is inhibited by oleic acid. Functionally, oxidoreductase that catalyzes the last step of the cholesterol synthesis pathway, which transforms cholesta-5,7-dien-3beta-ol (7-dehydrocholesterol,7-DHC) into cholesterol by reducing the C7-C8 double bond of its sterol core. Can also metabolize cholesta-5,7,24-trien-3beta-ol (7-dehydrodemosterol, 7-DHD) to desmosterol, which is then metabolized by the Delta(24)-sterol reductase (DHCR24) to cholesterol. Modulates ferroptosis (a form of regulated cell death driven by iron-dependent lipid peroxidation) through the metabolic breakdown of the anti-ferroptotic metabolites 7-DHC and 7-DHD which, when accumulated, divert the propagation of peroxyl radical-mediated damage from phospholipid components to its sterol core, protecting plasma and mitochondrial membranes from phospholipid autoxidation. Its function is as follows. Component of the microsomal antiestrogen binding site (AEBS), a multiproteic complex at the ER membrane that consists of an association between cholestenol Delta-isomerase/EBP and DHCR7. This complex is responsible for cholesterol-5,6-epoxide hydrolase (ChEH) activity, which consists in the hydration of cholesterol-5,6-epoxides (5,6-EC) into cholestane-3beta,5alpha,6beta-triol (CT). The precise role of each component of this complex has not been described yet. This chain is 7-dehydrocholesterol reductase, found in Homo sapiens (Human).